Consider the following 104-residue polypeptide: Small ribosomal subunit protein bS6 (104 aa).

The protein belongs to the bacterial ribosomal protein bS6 family.

Binds together with bS18 to 16S ribosomal RNA. The sequence is that of Small ribosomal subunit protein bS6 from Elusimicrobium minutum (strain Pei191).